The primary structure comprises 361 residues: Tetraacyldisaccharide 4'-kinase (361 aa).

49–56 contacts ATP; sequence TTGGTGKT.

It belongs to the LpxK family.

The catalysed reaction is a lipid A disaccharide + ATP = a lipid IVA + ADP + H(+). The protein operates within glycolipid biosynthesis; lipid IV(A) biosynthesis; lipid IV(A) from (3R)-3-hydroxytetradecanoyl-[acyl-carrier-protein] and UDP-N-acetyl-alpha-D-glucosamine: step 6/6. Transfers the gamma-phosphate of ATP to the 4'-position of a tetraacyldisaccharide 1-phosphate intermediate (termed DS-1-P) to form tetraacyldisaccharide 1,4'-bis-phosphate (lipid IVA). This Chlorobaculum parvum (strain DSM 263 / NCIMB 8327) (Chlorobium vibrioforme subsp. thiosulfatophilum) protein is Tetraacyldisaccharide 4'-kinase.